The sequence spans 333 residues: Ig gamma-2B chain C region (333 aa).

3 Ig-like domains span residues 6–96, 124–223, and 232–328; these read PSVY…KKVE, PSVF…KTIS, and PQVY…KSIS. 3 disulfide bridges follow: Cys27–Cys80, Cys147–Cys207, and Cys253–Cys311.

This chain is Ig gamma-2B chain C region (Igh-1a), found in Rattus norvegicus (Rat).